Reading from the N-terminus, the 361-residue chain is Glutaminyl-peptide cyclotransferase (361 aa).

Positions 1–28 are cleaved as a signal peptide; it reads MAGCRDPRVVDTLHLLLLVAVLPLAVSG. Asparagine 49 carries N-linked (GlcNAc...) asparagine glycosylation. An intrachain disulfide couples cysteine 139 to cysteine 164. Aspartate 159 contributes to the Zn(2+) binding site. Residue asparagine 183 is glycosylated (N-linked (GlcNAc...) asparagine). Catalysis depends on glutamate 201, which acts as the Proton acceptor. Glutamate 202 is a Zn(2+) binding site. Aspartate 248 serves as the catalytic Proton acceptor. Histidine 330 contributes to the Zn(2+) binding site.

It belongs to the glutaminyl-peptide cyclotransferase family. As to expression, expressed mainly in brain tissue.

The protein localises to the secreted. It carries out the reaction N-terminal L-glutaminyl-[peptide] = N-terminal 5-oxo-L-prolyl-[peptide] + NH4(+). Responsible for the biosynthesis of pyroglutamyl peptides. Has a bias against acidic and tryptophan residues adjacent to the N-terminal glutaminyl residue and a lack of importance of chain length after the second residue. Also catalyzes N-terminal pyroglutamate formation. In Bos taurus (Bovine), this protein is Glutaminyl-peptide cyclotransferase (QPCT).